Here is a 176-residue protein sequence, read N- to C-terminus: Adenine phosphoribosyltransferase (176 aa).

Belongs to the purine/pyrimidine phosphoribosyltransferase family. In terms of assembly, homodimer.

The protein resides in the cytoplasm. The enzyme catalyses AMP + diphosphate = 5-phospho-alpha-D-ribose 1-diphosphate + adenine. Its pathway is purine metabolism; AMP biosynthesis via salvage pathway; AMP from adenine: step 1/1. In terms of biological role, catalyzes a salvage reaction resulting in the formation of AMP, that is energically less costly than de novo synthesis. The protein is Adenine phosphoribosyltransferase of Methylobacillus flagellatus (strain ATCC 51484 / DSM 6875 / VKM B-1610 / KT).